A 160-amino-acid chain; its full sequence is Ribosome maturation factor RimP (160 aa).

The protein belongs to the RimP family.

Its subcellular location is the cytoplasm. In terms of biological role, required for maturation of 30S ribosomal subunits. This chain is Ribosome maturation factor RimP, found in Syntrophus aciditrophicus (strain SB).